We begin with the raw amino-acid sequence, 68 residues long: Dermaseptin-H5 (68 aa).

Positions Lys-1 to Cys-17 are cleaved as a signal peptide. Positions Glu-18–Met-38 are excised as a propeptide. The interval Glu-19–Arg-40 is disordered. Residues Glu-25–Gln-35 are compositionally biased toward acidic residues. The residue at position 65 (Leu-65) is a Leucine amide. The propeptide occupies Glu-67–Gln-68.

In terms of tissue distribution, expressed by the skin glands.

The protein resides in the secreted. Has antibacterial activity against the Gram-negative bacteria E.coli ATCC 11775 (MIC=0.5 uM), and the Gram-positive bacteria S.aureus ATCC 12600 (MIC=0.5 uM) and M.luteus ATCC 49732 (MIC=2.0 uM). Does not inhibit the growth of the fungus C.albicans. Probably acts by disturbing membrane functions with its amphipathic structure. The sequence is that of Dermaseptin-H5 from Pithecopus azureus (Orange-legged monkey tree frog).